The sequence spans 149 residues: MKSTEFHPVHYDAHGRLRLPLLFWLVLLLQARTWVLFVIAGASREQGTALLNLFYPDHDNFWLGLIPGIPAVLAFLLSGRRATFPRTWRVLYFLLLLAQVVLLCWQPWLWLNGESVSGIGLALVVADIVALIWLLTNRRLRACFYEVKE.

Residues 1–18 (MKSTEFHPVHYDAHGRLR) lie on the Cytoplasmic side of the membrane. Residues 19 to 39 (LPLLFWLVLLLQARTWVLFVI) form a helical membrane-spanning segment. At 40–58 (AGASREQGTALLNLFYPDH) the chain is on the periplasmic side. Residues 59-79 (DNFWLGLIPGIPAVLAFLLSG) form a helical membrane-spanning segment. Topologically, residues 80–89 (RRATFPRTWR) are cytoplasmic. Residues 90–110 (VLYFLLLLAQVVLLCWQPWLW) traverse the membrane as a helical segment. Residues 111–115 (LNGES) lie on the Periplasmic side of the membrane. The chain crosses the membrane as a helical span at residues 116-136 (VSGIGLALVVADIVALIWLLT). The Cytoplasmic portion of the chain corresponds to 137–149 (NRRLRACFYEVKE).

Its subcellular location is the cell inner membrane. This Escherichia coli (strain K12) protein is Inner membrane protein YfeZ (yfeZ).